The primary structure comprises 436 residues: MLDIKVIRENLDWSKKKLATRGIKPEELDKLVAIDKERREALTKSEQLKQKRNEVSDQIAQAKRNKEDASDAIKAMREVGKEIKDLDKEVEDLTQKQNYILLRLPNFPADSDPIGPDESYNEEVRKWHEPTKLDFEPKPHWEIGTELNILDWDTAAKVSGARFVYYKGAGALLERAVSNFFLDENTKDGYTEVIPPYLVNDASMQGTGQFPKFTEDVYTIVDNDDPDKPRDLTLIPTAEVPLVNYFRGKILDGEQLPINVTAFSPAFRSEAGSAGRDTRGLIRMHEFRKVEMVKIVDEESSWDELEKLTHNAEHLLQKLGLPYHVVALSTGDASFTSAKTYDLEVWMPAQDKYREISSCSNCTDFQARRSLIRYRDENGKLHLAHTLNGSGLAVGRTVAAILENYQNEDGTVNVPEALQPYMHGMKVITKEPKFGE.

Residues 43 to 55 (TKSEQLKQKRNEV) show a composition bias toward basic and acidic residues. The segment at 43-68 (TKSEQLKQKRNEVSDQIAQAKRNKED) is disordered. Position 237-239 (237-239 (TAE)) interacts with L-serine. 268 to 270 (RSE) contacts ATP. An L-serine-binding site is contributed by Glu291. Position 355 to 358 (355 to 358 (EISS)) interacts with ATP. Ser390 provides a ligand contact to L-serine.

Belongs to the class-II aminoacyl-tRNA synthetase family. Type-1 seryl-tRNA synthetase subfamily. Homodimer. The tRNA molecule binds across the dimer.

It is found in the cytoplasm. It carries out the reaction tRNA(Ser) + L-serine + ATP = L-seryl-tRNA(Ser) + AMP + diphosphate + H(+). The catalysed reaction is tRNA(Sec) + L-serine + ATP = L-seryl-tRNA(Sec) + AMP + diphosphate + H(+). The protein operates within aminoacyl-tRNA biosynthesis; selenocysteinyl-tRNA(Sec) biosynthesis; L-seryl-tRNA(Sec) from L-serine and tRNA(Sec): step 1/1. In terms of biological role, catalyzes the attachment of serine to tRNA(Ser). Is also able to aminoacylate tRNA(Sec) with serine, to form the misacylated tRNA L-seryl-tRNA(Sec), which will be further converted into selenocysteinyl-tRNA(Sec). The protein is Serine--tRNA ligase of Lactobacillus johnsonii (strain CNCM I-12250 / La1 / NCC 533).